The sequence spans 488 residues: Pup--protein ligase (488 aa).

Glu-33 lines the Mg(2+) pocket. Arg-76 lines the ATP pocket. Tyr-78 is a binding site for Mg(2+). The active-site Proton acceptor is the Asp-80. A Mg(2+)-binding site is contributed by Glu-86. Thr-89 and Trp-453 together coordinate ATP.

Belongs to the Pup ligase/Pup deamidase family. Pup-conjugating enzyme subfamily.

The catalysed reaction is ATP + [prokaryotic ubiquitin-like protein]-L-glutamate + [protein]-L-lysine = ADP + phosphate + N(6)-([prokaryotic ubiquitin-like protein]-gamma-L-glutamyl)-[protein]-L-lysine.. It functions in the pathway protein degradation; proteasomal Pup-dependent pathway. The protein operates within protein modification; protein pupylation. Functionally, catalyzes the covalent attachment of the prokaryotic ubiquitin-like protein modifier Pup to the proteasomal substrate proteins, thereby targeting them for proteasomal degradation. This tagging system is termed pupylation. The ligation reaction involves the side-chain carboxylate of the C-terminal glutamate of Pup and the side-chain amino group of a substrate lysine. In Bifidobacterium adolescentis (strain ATCC 15703 / DSM 20083 / NCTC 11814 / E194a), this protein is Pup--protein ligase.